A 333-amino-acid chain; its full sequence is Phosphoribosylformylglycinamidine cyclo-ligase (333 aa).

Belongs to the AIR synthase family.

The protein resides in the cytoplasm. The catalysed reaction is 2-formamido-N(1)-(5-O-phospho-beta-D-ribosyl)acetamidine + ATP = 5-amino-1-(5-phospho-beta-D-ribosyl)imidazole + ADP + phosphate + H(+). The protein operates within purine metabolism; IMP biosynthesis via de novo pathway; 5-amino-1-(5-phospho-D-ribosyl)imidazole from N(2)-formyl-N(1)-(5-phospho-D-ribosyl)glycinamide: step 2/2. In Clostridium perfringens (strain ATCC 13124 / DSM 756 / JCM 1290 / NCIMB 6125 / NCTC 8237 / Type A), this protein is Phosphoribosylformylglycinamidine cyclo-ligase.